Here is a 323-residue protein sequence, read N- to C-terminus: Elongation factor P--(R)-beta-lysine ligase (323 aa).

76–78 (SPE) contributes to the substrate binding site. Residues 100-102 (RNE) and Asn109 each bind ATP. A substrate-binding site is contributed by Tyr118. ATP is bound at residue 242–243 (EL). Glu249 is a binding site for substrate. Gly298 provides a ligand contact to ATP.

The protein belongs to the class-II aminoacyl-tRNA synthetase family. EpmA subfamily. Homodimer.

The catalysed reaction is D-beta-lysine + L-lysyl-[protein] + ATP = N(6)-((3R)-3,6-diaminohexanoyl)-L-lysyl-[protein] + AMP + diphosphate + H(+). Its function is as follows. With EpmB is involved in the beta-lysylation step of the post-translational modification of translation elongation factor P (EF-P). Catalyzes the ATP-dependent activation of (R)-beta-lysine produced by EpmB, forming a lysyl-adenylate, from which the beta-lysyl moiety is then transferred to the epsilon-amino group of a conserved specific lysine residue in EF-P. The polypeptide is Elongation factor P--(R)-beta-lysine ligase (Pasteurella multocida (strain Pm70)).